The chain runs to 79 residues: uncharacterized protein (79 aa).

Residues 1 to 24 (MKMNPCTVILCKSLFFFCLFQVDC) form the signal peptide. Residue Asn33 is glycosylated (N-linked (GlcNAc...) asparagine).

Its subcellular location is the secreted. This is an uncharacterized protein from Saccharomyces cerevisiae (strain ATCC 204508 / S288c) (Baker's yeast).